The sequence spans 113 residues: T cell receptor alpha variable 36/delta variable 7 (113 aa).

A signal peptide spans M1–S21. Residues D23–E113 form the Ig-like domain. Residues N43 and N96 are each glycosylated (N-linked (GlcNAc...) asparagine). C44 and C110 form a disulfide bridge.

Alpha-beta TR is a heterodimer composed of an alpha and beta chain; disulfide-linked. The alpha-beta TR is associated with the transmembrane signaling CD3 coreceptor proteins to form the TR-CD3 (TcR or TCR). The assembly of alpha-beta TR heterodimers with CD3 occurs in the endoplasmic reticulum where a single alpha-beta TR heterodimer associates with one CD3D-CD3E heterodimer, one CD3G-CD3E heterodimer and one CD247 homodimer forming a stable octameric structure. CD3D-CD3E and CD3G-CD3E heterodimers preferentially associate with TR alpha and TR beta chains, respectively. The association of the CD247 homodimer is the last step of TcR assembly in the endoplasmic reticulum and is required for transport to the cell surface.

Its subcellular location is the cell membrane. Its function is as follows. V region of the variable domain of T cell receptor (TR) alpha chain that participates in the antigen recognition. Alpha-beta T cell receptors are antigen specific receptors which are essential to the immune response and are present on the cell surface of T lymphocytes. Recognize peptide-major histocompatibility (MH) (pMH) complexes that are displayed by antigen presenting cells (APC), a prerequisite for efficient T cell adaptive immunity against pathogens. Binding of alpha-beta TR to pMH complex initiates TR-CD3 clustering on the cell surface and intracellular activation of LCK that phosphorylates the ITAM motifs of CD3G, CD3D, CD3E and CD247 enabling the recruitment of ZAP70. In turn ZAP70 phosphorylates LAT, which recruits numerous signaling molecules to form the LAT signalosome. The LAT signalosome propagates signal branching to three major signaling pathways, the calcium, the mitogen-activated protein kinase (MAPK) kinase and the nuclear factor NF-kappa-B (NF-kB) pathways, leading to the mobilization of transcription factors that are critical for gene expression and essential for T cell growth and differentiation. The T cell repertoire is generated in the thymus, by V-(D)-J rearrangement. This repertoire is then shaped by intrathymic selection events to generate a peripheral T cell pool of self-MH restricted, non-autoaggressive T cells. Post-thymic interaction of alpha-beta TR with the pMH complexes shapes TR structural and functional avidity. In Homo sapiens (Human), this protein is T cell receptor alpha variable 36/delta variable 7.